The sequence spans 341 residues: Oxidoreductase swnN (341 aa).

It belongs to the NmrA-type oxidoreductase family. Isoflavone reductase subfamily.

It participates in mycotoxin biosynthesis. Oxidoreductase; part of the gene cluster that mediates the biosynthesis of swainsonine (SW), a cytotoxic fungal alkaloid and a potential cancer therapy drug. Swainsonine production occurs via a multibranched pathway and is dispensable for fungal colonization of plants and infection of insect hosts. The first step of swainsonine biosynthesis is the production of the precursor pipecolic acid (PA) via conversion of L-lysine (Lys) to 1-piperideine-6-carboxylate (P6C) by the aminotransferase swnA, the latter being further reduced to PA by the reductase swnR. PA can be converted from lysine by both the SW biosynthetic cluster and the unclustered genes such as lysine cyclodeaminase. The PKS-NRPS hybrid synthetase swnK uptakes and condensates PA and malonyl-CoA with and without skipping of the ketoreductase (KR) domain in order to produce 3 intermediates, 1-oxoindolizidine, (1S)-1-hydroxyindolizin, and (1R)-1-hydroxyindolizine; with the transisomer (1S)-1-hydroxyindolizin being predominant. The terminal thioester reductase (TE) domain of swnK is involved in reduction of the thioester bond to release the intermediate aldehydes. The oxidoreductase swnN could contribute to the reduction of 1-oxoindolizidine to (1S)-1-hydroxyindolizin and (1R)-1-hydroxyindolizine, contributing to the major route of SW production. The dioxygenase swnH2 would be responsible for the oxidization of (1R)-1-hydroxyindolizine into (1R,2S)-1,2-dihydroxyindolizine and of (1S)-1-hydroxyindolizin to yield both (1R,2S)-1,2-dihydroxyindolizine and (1S,2S)-1,2-dihydroxyindolizine. The dioxygenase swnH1 then performs the conversion of the 1,2-dihydroxyindolizine epimers to SW. The chain is Oxidoreductase swnN from Metarhizium robertsii (strain ARSEF 23 / ATCC MYA-3075) (Metarhizium anisopliae (strain ARSEF 23)).